The following is a 135-amino-acid chain: 2-iminobutanoate/2-iminopropanoate deaminase (135 aa).

Ser-2 carries the N-acetylserine modification. 4 positions are modified to N6-succinyllysine: Lys-13, Lys-60, Lys-67, and Lys-134.

It belongs to the RutC family. As to quaternary structure, homotrimer. Interacts with YTHDF2. In terms of tissue distribution, expressed predominantly in liver and kidney. Lower levels in lung and brain.

The protein resides in the cytoplasm. Its subcellular location is the nucleus. It is found in the peroxisome. The protein localises to the mitochondrion. It carries out the reaction 2-iminobutanoate + H2O = 2-oxobutanoate + NH4(+). It catalyses the reaction 2-iminopropanoate + H2O = pyruvate + NH4(+). Catalyzes the hydrolytic deamination of enamine/imine intermediates that form during the course of normal metabolism. May facilitate the release of ammonia from these potentially toxic reactive metabolites, reducing their impact on cellular components. It may act on enamine/imine intermediates formed by several types of pyridoxal-5'-phosphate-dependent dehydratases including L-threonine dehydratase. Functionally, also promotes endoribonucleolytic cleavage of some transcripts by promoting recruitment of the ribonuclease P/MRP complex. Acts by bridging YTHDF2 and the ribonuclease P/MRP complex. RIDA/HRSP12 binds to N6-methyladenosine (m6A)-containing mRNAs containing a 5'-GGUUC-3' motif: cooperative binding of RIDA/HRSP12 and YTHDF2 to such transcripts lead to recruitment of the ribonuclease P/MRP complex and subsequent endoribonucleolytic cleavage. The chain is 2-iminobutanoate/2-iminopropanoate deaminase from Mus musculus (Mouse).